The primary structure comprises 2587 residues: Protein KINKY POLLEN (2587 aa).

The first 27 residues, 1 to 27, serve as a signal peptide directing secretion; the sequence is MAAFLVMFIFTIALFVALLWVFFKSLP. Residue Asn71 is glycosylated (N-linked (GlcNAc...) asparagine). Positions 103 to 124 are disordered; the sequence is PSHSSKGPRKPKTRKSSSGGKG. The segment covering 108–117 has biased composition (basic residues); it reads KGPRKPKTRK. Asn262, Asn281, and Asn485 each carry an N-linked (GlcNAc...) asparagine glycan. A disordered region spans residues 270-290; sequence SKGEVIDSSSGNTTSEKPPKQ. Positions 276–285 are enriched in polar residues; it reads DSSSGNTTSE. The segment at 589 to 611 is disordered; the sequence is GSSSKNKQEKGAHRSKPPSGRGT. A coiled-coil region spans residues 691-716; that stretch reads TLNKEIQSTQVELETAKAIYQEFLEE. Positions 784–814 are disordered; the sequence is QHGNRNPEEASTVTGDKQKEEPTTTPNSLDK. 4 N-linked (GlcNAc...) asparagine glycosylation sites follow: Asn1155, Asn1250, Asn1281, and Asn1486. 3 disordered regions span residues 1571–1608, 1646–1673, and 1729–1797; these read HCSKPAQMSRTSSLSGSTDRVTSDNGTSTSDGTEKHPD, VDARSTKEKQSEPEENSHSDPSDDDGYN, and EGNQ…PEEE. Residues 1576 to 1590 are compositionally biased toward polar residues; the sequence is AQMSRTSSLSGSTDR. Asn1595 is a glycosylation site (N-linked (GlcNAc...) asparagine). A compositionally biased stretch (basic and acidic residues) spans 1646-1666; it reads VDARSTKEKQSEPEENSHSDP. Polar residues predominate over residues 1746–1760; the sequence is KQPSTGSGNLASQSK. 5 N-linked (GlcNAc...) asparagine glycosylation sites follow: Asn1861, Asn1951, Asn1981, Asn2036, and Asn2278. Positions 2006–2036 form a coiled coil; it reads IEEVELAKIELEAKERDRMMLLDDIRKLTQN. Over residues 2274 to 2287 the composition is skewed to polar residues; it reads QGSKNQSLKSSTIR. Disordered stretches follow at residues 2274 to 2299, 2319 to 2360, and 2442 to 2469; these read QGSKNQSLKSSTIRGSGRELRRTSSF, SMEH…KKSR, and KDDIGLRDKDESGRTDQESGAWVKRPGD. 4 stretches are compositionally biased toward basic and acidic residues: residues 2289–2299, 2322–2336, 2343–2359, and 2442–2458; these read SGRELRRTSSF, HQGESSKGKLKDSKT, SVHEEKKGEKSLEDKKS, and KDDIGLRDKDESGRTDQ. N-linked (GlcNAc...) asparagine glycosylation is found at Asn2513 and Asn2544. A disordered region spans residues 2533 to 2587; sequence IRRHSKKFQNQNTTKGSKKTQLSPTLSPPKEEDQYESDSSSGSSAYEEFLDQNQI. The span at 2540-2557 shows a compositional bias: polar residues; it reads FQNQNTTKGSKKTQLSPT. The segment covering 2569–2579 has biased composition (low complexity); it reads SDSSSGSSAYE.

It belongs to the SABRE family. As to expression, mostly expressed in pollen and roots, especially in tip-growing cells, but also present in seedlings, stems, leaves, buds, flowers, siliques and seeds.

The protein localises to the secreted. It is found in the golgi apparatus. May be involved in membrane trafficking. Required for tip growth in pollen tubes and root hairs. The sequence is that of Protein KINKY POLLEN from Arabidopsis thaliana (Mouse-ear cress).